The following is a 468-amino-acid chain: Probable citrate synthase, mitochondrial (468 aa).

Residues His-303, His-349, and Asp-404 contribute to the active site.

This sequence belongs to the citrate synthase family. Homodimer.

The protein resides in the mitochondrion matrix. The catalysed reaction is oxaloacetate + acetyl-CoA + H2O = citrate + CoA + H(+). The protein operates within carbohydrate metabolism; tricarboxylic acid cycle; isocitrate from oxaloacetate: step 1/2. The polypeptide is Probable citrate synthase, mitochondrial (cts-1) (Caenorhabditis elegans).